A 163-amino-acid chain; its full sequence is Cuticle protein 38 (163 aa).

A run of 14 repeats spans residues 7–10 (AAPV), 13–16 (AAPA), 20–23 (AAPA), 26–29 (AAPV), 56–59 (AAPA), 62–65 (AAPA), 68–71 (AAPA), 75–78 (AAPA), 81–84 (AAPA), 93–96 (AAPV), 123–126 (AAPA), 135–138 (AAPA), 141–144 (AAPA), and 156–159 (AAPV).

Its function is as follows. Component of the cuticle of migratory locust which contains more than 100 different structural proteins. This Locusta migratoria (Migratory locust) protein is Cuticle protein 38.